Here is a 75-residue protein sequence, read N- to C-terminus: Chaplin-D (75 aa).

A signal peptide spans Met-1–Ala-23. The region spanning Ser-34–Asn-74 is the Chaplin domain. A disulfide bond links Cys-54 and Cys-72.

The protein belongs to the chaplin family. Short chaplin subfamily.

Its subcellular location is the cell surface. It is found in the secreted. The protein localises to the cell wall. The protein resides in the fimbrium. Functionally, one of 8 partially redundant surface-active proteins required for efficient formation of aerial mycelium; the short chaplins assemble into a hydrophobic, amyloidal fibrillar surface layer that envelopes and protects aerial hyphae and spores, presumably anchored to the long chaplins. Chaplins have an overlapping function with the surface-active SapB peptide; chaplins are essential on minimal medium while on rich medium both chaplins and SapB are required for efficient aerial hyphae formation. Chaplins are also involved in cell attachment to a hydrophobic surface. Forms amyloid fibrils in vitro probably composed of stacked beta-sheets, at low extracellular concentrations individually restores the ability to form aerial hyphae to a chaplin-deficient strain. A small chaplin extract (ChpD, ChpE, ChpF, ChpG and ChpH) self-assembles into 2 different amyloids; small fibrils at the air-water interface form an amphipathic membrane that resembles spore-surface structures involved in aerial hyphae formation, and hydrophilic fibrils in solution that resemble the fibers that attach cells to a hydrophobic surface. At the air-water interface the hydrophilic surface is in contact with water (probably equivalent to the peptidoglycan layer), while the hydrophobic face is exposed to the air, making the surface of the aerial hyphae hydrophobic. A minimal chaplin strain capable of forming aerial mycelium/hyphae on minimal medium contains ChpC, ChpE and ChpH. The strain also has restored rodlet formation on the hyphae surface. A second minimal chaplin strain with ChpA, ChpD and ChpE makes slightly less robust hyphae. A small chaplin extract applied to a chaplin-deficient strain restores aerial hyphae formation. The small chaplin extract forms an amyloid-like structure similar to that seen on the surface of cells without rodlets (rdlA-rdlB deletions), and is highly surface active, reducing surface tension from 72 to 26 mJ/m(2), which probably allows escape of hyphae from an aqueous environment into air. The chain is Chaplin-D from Streptomyces coelicolor (strain ATCC BAA-471 / A3(2) / M145).